The sequence spans 92 residues: MSLRRIPNKNLIPEIPPFPEESINLLQNGVNTIPRINLEDVDVMSTKLPTDEELTENYQNWKKNLEVERLEKLKRIAPGYSASSPLLPSKSD.

This is an uncharacterized protein from Schizosaccharomyces pombe (strain 972 / ATCC 24843) (Fission yeast).